The sequence spans 1956 residues: Probable cation-transporting ATPase 1 (1956 aa).

The Cytoplasmic segment spans residues 1–35 (MHLMCTGLRNEKLINDRKILYGECNLNIKSDSFII). The helical transmembrane segment at 36 to 58 (LLFKEIMNPFFIFQIFAMIVWSL) threads the bilayer. The Extracellular segment spans residues 59 to 61 (DNY). Residues 62 to 80 (IEYTISILFITSISIILEL) form a helical membrane-spanning segment. Over 81-407 (KNTIKNQKKI…KKELNLINDS (327 aa)) the chain is Cytoplasmic. The helical transmembrane segment at 408 to 427 (YKFLIILIIYALFSVFILLY) threads the bilayer. At 428-440 (ITLSNNEYTNHII) the chain is on the extracellular side. A helical membrane pass occupies residues 441–462 (IKCLDIITDAIPPALPTTLTVG). The Cytoplasmic segment spans residues 463–1818 (ISIAISRLKK…SLVNSFQLFK (1356 aa)). The active-site 4-aspartylphosphate intermediate is Asp-496. The disordered stretch occupies residues 901-938 (YGNNNDDNNDDDNNNDDDNNDDNNNDDNNNDDNNDDNN). Positions 907–935 (DNNDDDNNNDDDNNDDNNNDDNNNDDNND) are enriched in acidic residues. Mg(2+) contacts are provided by Asp-1760 and Asp-1764. A helical transmembrane segment spans residues 1819-1837 (FISLYSIMQCSQVLILYSI). Residues 1838 to 1845 (SNKLTDNQ) are Extracellular-facing. The chain crosses the membrane as a helical span at residues 1846-1863 (YIFIDIVTILPLSIFMCW). Over 1864–1881 (TSASEKLSKNIPIGKLFS) the chain is Cytoplasmic. A helical transmembrane segment spans residues 1882–1905 (FPILISIYGQIIIQLFFVMISLVV). The Extracellular segment spans residues 1906–1928 (LMNLSFYKYDKNKVMKEKSDDTY). A helical membrane pass occupies residues 1929-1952 (LYKAQKYTLIYSLLFSKFVYVYIF). At 1953-1956 (KYKE) the chain is on the cytoplasmic side.

The protein belongs to the cation transport ATPase (P-type) (TC 3.A.3) family. Type V subfamily.

It is found in the membrane. The catalysed reaction is ATP + H2O = ADP + phosphate + H(+). The chain is Probable cation-transporting ATPase 1 from Plasmodium falciparum.